The following is a 449-amino-acid chain: 3-phosphoshikimate 1-carboxyvinyltransferase (449 aa).

The disordered stretch occupies residues 1 to 23; it reads MSHSASPKPATARRSEALTGEIR. 3-phosphoshikimate contacts are provided by Lys-28, Ser-29, and Arg-33. Lys-28 is a binding site for phosphoenolpyruvate. Residues Gly-100 and Arg-128 each coordinate phosphoenolpyruvate. Residues Ser-173, Gln-175, Asp-326, and Lys-353 each coordinate 3-phosphoshikimate. Gln-175 contacts phosphoenolpyruvate. Residue Asp-326 is the Proton acceptor of the active site. Residues Arg-357 and Arg-402 each coordinate phosphoenolpyruvate.

The protein belongs to the EPSP synthase family. Monomer.

It localises to the cytoplasm. The enzyme catalyses 3-phosphoshikimate + phosphoenolpyruvate = 5-O-(1-carboxyvinyl)-3-phosphoshikimate + phosphate. It functions in the pathway metabolic intermediate biosynthesis; chorismate biosynthesis; chorismate from D-erythrose 4-phosphate and phosphoenolpyruvate: step 6/7. Catalyzes the transfer of the enolpyruvyl moiety of phosphoenolpyruvate (PEP) to the 5-hydroxyl of shikimate-3-phosphate (S3P) to produce enolpyruvyl shikimate-3-phosphate and inorganic phosphate. This chain is 3-phosphoshikimate 1-carboxyvinyltransferase, found in Pseudomonas sp. (strain PG2982).